Consider the following 101-residue polypeptide: Small ribosomal subunit protein bS18c (101 aa).

Basic residues predominate over residues 1-19 (MNKSKRPFTKSKRSFRRRL). The interval 1–23 (MNKSKRPFTKSKRSFRRRLPPIQ) is disordered.

The protein belongs to the bacterial ribosomal protein bS18 family. In terms of assembly, part of the 30S ribosomal subunit.

The protein resides in the plastid. It localises to the chloroplast. This Draba nemorosa (Woodland whitlowgrass) protein is Small ribosomal subunit protein bS18c.